Reading from the N-terminus, the 354-residue chain is N-acetyl-gamma-glutamyl-phosphate reductase (354 aa).

Cys156 is a catalytic residue.

This sequence belongs to the NAGSA dehydrogenase family. Type 1 subfamily.

The protein resides in the cytoplasm. The catalysed reaction is N-acetyl-L-glutamate 5-semialdehyde + phosphate + NADP(+) = N-acetyl-L-glutamyl 5-phosphate + NADPH + H(+). Its pathway is amino-acid biosynthesis; L-arginine biosynthesis; N(2)-acetyl-L-ornithine from L-glutamate: step 3/4. In terms of biological role, catalyzes the NADPH-dependent reduction of N-acetyl-5-glutamyl phosphate to yield N-acetyl-L-glutamate 5-semialdehyde. This Bordetella bronchiseptica (strain ATCC BAA-588 / NCTC 13252 / RB50) (Alcaligenes bronchisepticus) protein is N-acetyl-gamma-glutamyl-phosphate reductase.